Here is a 393-residue protein sequence, read N- to C-terminus: Methylthioribose-1-phosphate isomerase (393 aa).

Asp-265 serves as the catalytic Proton donor.

This sequence belongs to the eIF-2B alpha/beta/delta subunits family. MtnA subfamily.

The protein resides in the cytoplasm. The protein localises to the nucleus. The enzyme catalyses 5-(methylsulfanyl)-alpha-D-ribose 1-phosphate = 5-(methylsulfanyl)-D-ribulose 1-phosphate. Its pathway is amino-acid biosynthesis; L-methionine biosynthesis via salvage pathway; L-methionine from S-methyl-5-thio-alpha-D-ribose 1-phosphate: step 1/6. Functionally, catalyzes the interconversion of methylthioribose-1-phosphate (MTR-1-P) into methylthioribulose-1-phosphate (MTRu-1-P). In Cryptococcus neoformans var. neoformans serotype D (strain B-3501A) (Filobasidiella neoformans), this protein is Methylthioribose-1-phosphate isomerase.